A 1381-amino-acid chain; its full sequence is Serine-aspartate repeat-containing protein D (1381 aa).

Residues 1-35 (MLNRENKTAITRKGMVSNRLNKFSIRKYTVGTASI) form the signal peptide. Positions 23-34 (FSIRKYTVGTAS) match the YSIRK-G/S signaling motif motif. A ligand binding A region region spans residues 36-568 (LVGTTLIFGL…NNQSGGAGQE (533 aa)). The segment at 54–185 (ESTNKELNEA…NKKVDAKTES (132 aa)) is disordered. Composition is skewed to polar residues over residues 62-71 (EATTSASDNQ) and 94-108 (EMVS…SNGN). Residues 130-145 (KSDEQASPKSTNEDLN) are compositionally biased toward basic and acidic residues. Polar residues-rich tracts occupy residues 146 to 155 (TKQTISNQEA) and 163 to 173 (NKSVVNVQPTN). The span at 174-183 (EENKKVDAKT) shows a compositional bias: basic and acidic residues. CNA-B domains follow at residues 569–680 (VYKI…IYKP), 681–791 (KYNL…YKTP), 792–901 (KYNL…FYKP), 902–1012 (TYNL…YKTP), and 1013–1123 (KYSL…EEET). Disordered regions lie at residues 857 to 883 (ETPS…TSTT), 972 to 992 (YTPT…GLTT), and 1078 to 1357 (EKPA…SNNA). Polar residues-rich tracts occupy residues 860-869 (SGYTPTQVGS) and 972-981 (YTPTSVTSGN). Acidic residues-rich tracts occupy residues 1091–1101 (TEDDKDADGGE), 1118–1134 (YYEE…DSDS), 1142–1164 (SDSD…DSDS), and 1172–1320 (SDSD…DSDS). Positions 1344 to 1348 (LPETG) match the LPXTG sorting signal motif. Threonine 1347 carries the pentaglycyl murein peptidoglycan amidated threonine modification. Residues 1348 to 1381 (GNENSGSNNATLFGGLFAALGSLLLFGRRKKQNK) constitute a propeptide, removed by sortase.

This sequence belongs to the serine-aspartate repeat-containing protein (SDr) family. As to quaternary structure, interacts with host DSG1; this interaction increases S.aureus adherence to keratinocytes.

Its subcellular location is the secreted. The protein resides in the cell wall. Cell surface-associated calcium-binding protein which plays an important role in adhesion and pathogenesis. Mediates interactions with components of the extracellular matrix such as host DSG1 to promote bacterial adhesion to host cells. Contributes to the resistance to killing by innate immune components such as neutrophils present in blood and thus attenuates bacterial clearance. In Staphylococcus aureus (strain USA300), this protein is Serine-aspartate repeat-containing protein D (sdrD).